A 40-amino-acid chain; its full sequence is MADTTGRIPLWLVGTVTGIPVIGLIGVFFYGSYSGLGSSL.

A helical transmembrane segment spans residues 8-28 (IPLWLVGTVTGIPVIGLIGVF).

This sequence belongs to the PsbJ family. PSII is composed of 1 copy each of membrane proteins PsbA, PsbB, PsbC, PsbD, PsbE, PsbF, PsbH, PsbI, PsbJ, PsbK, PsbL, PsbM, PsbT, PsbX, PsbY, PsbZ, Psb30/Ycf12, at least 3 peripheral proteins of the oxygen-evolving complex and a large number of cofactors. It forms dimeric complexes.

Its subcellular location is the plastid. The protein localises to the chloroplast thylakoid membrane. Its function is as follows. One of the components of the core complex of photosystem II (PSII). PSII is a light-driven water:plastoquinone oxidoreductase that uses light energy to abstract electrons from H(2)O, generating O(2) and a proton gradient subsequently used for ATP formation. It consists of a core antenna complex that captures photons, and an electron transfer chain that converts photonic excitation into a charge separation. The sequence is that of Photosystem II reaction center protein J from Musa acuminata (Banana).